Here is a 675-residue protein sequence, read N- to C-terminus: 1,4-alpha-glucan branching enzyme TK1436 (675 aa).

The Nucleophile role is filled by Glu183. Arg261 and Gly278 together coordinate substrate. Asp354 acts as the Proton donor in catalysis. The substrate site is built by Trp407, Asp467, and Gln476. Disordered regions lie at residues 537–563 (PELE…KVLT) and 581–627 (EETR…LSIK). Composition is skewed to basic and acidic residues over residues 549 to 563 (PPEK…KVLT) and 581 to 595 (EETR…EASK). Over residues 596 to 616 (RGKRKSSKSKRLPRKVSKKAP) the composition is skewed to basic residues.

It belongs to the glycosyl hydrolase 57 family. As to quaternary structure, monomer.

It carries out the reaction Transfers a segment of a (1-&gt;4)-alpha-D-glucan chain to a primary hydroxy group in a similar glucan chain.. Catalyzes the formation of branch points in alpha-glucans by cleavage of an alpha-1,4 glycosidic bond and subsequent transfer of the cleaved-off oligosaccharide to a new alpha-1,6 position. The branch chain-length distribution of the reaction products shows degree of polymerization (DP) of 5 to 30, with two local maxima at DP 6 and DP 11. Exhibits an alpha-retaining catalytic mechanism. Does not display alpha-galactosidase or pullulanase activity, since melibiose and pullulan are not substrates. Is not able to catalyze the hydrolysis or transglycosylation of maltoheptaose, suggesting that the TK1436 protein contains neither alpha-amylase nor 4-alpha-glucanotransferase activity. The sequence is that of 1,4-alpha-glucan branching enzyme TK1436 from Thermococcus kodakarensis (strain ATCC BAA-918 / JCM 12380 / KOD1) (Pyrococcus kodakaraensis (strain KOD1)).